Reading from the N-terminus, the 320-residue chain is NAC domain-containing protein 20 (320 aa).

An NAC domain is found at 14-170 (LPPGFRFHPT…DWAVCRIFHK (157 aa)). The DNA-binding element occupies 114 to 176 (IGMKKTLVFY…IFHKSSGIKK (63 aa)).

Forms homodimers. Forms heterodimers with NAC26. As to expression, expressed in developing seeds. Expressed in developing endosperm.

It localises to the nucleus. The protein localises to the endoplasmic reticulum. In terms of biological role, transcription factor that acts redundantly with NAC26 to regulate the expression of genes involved in the biosynthesis of starch and storage proteins in grain. Directly binds to the promoters of starch synthase 1 (SS1), pullulanase (PUL), glutelin A1 (GLUA1), glutelins B4 and B5 (GLUB4 and GLUB5), alpha-globulin and 16 kDa prolamin, and activates their expression. This Oryza sativa subsp. japonica (Rice) protein is NAC domain-containing protein 20.